Consider the following 204-residue polypeptide: MNPLLQLSCPLLLASQSPRRRALLDRIDVPFEARVSPADETLAPSVAPAEAVRTLARRKARPVAADRPSALVLAADTVVAHDGEILNKPEDSSHARAMLRRLQDTSHAVYTGVSLVHAGSDRTATAVETTAVVLGPLSDAEIRAYVASGSPLDKAGGYGIQDHTAPFFVERIEGDYYNVVGLPLRRLYRTLRASFADLLEASSA.

Asp76 serves as the catalytic Proton acceptor.

This sequence belongs to the Maf family. YhdE subfamily. A divalent metal cation is required as a cofactor.

The protein resides in the cytoplasm. The enzyme catalyses dTTP + H2O = dTMP + diphosphate + H(+). It carries out the reaction UTP + H2O = UMP + diphosphate + H(+). In terms of biological role, nucleoside triphosphate pyrophosphatase that hydrolyzes dTTP and UTP. May have a dual role in cell division arrest and in preventing the incorporation of modified nucleotides into cellular nucleic acids. This chain is dTTP/UTP pyrophosphatase, found in Salinibacter ruber (strain DSM 13855 / M31).